The following is a 541-amino-acid chain: L-ornithine N(5)-monooxygenase (541 aa).

Residues 50–58 (EKQPEFQWH) and glutamine 69 contribute to the FAD site. Lysine 74 is a binding site for substrate. Residue 223-226 (SGQS) participates in NADP(+) binding. Substrate is bound by residues 269-272 (NEIF) and asparagine 300. NADP(+) is bound at residue 300-302 (NYS). A disordered region spans residues 430–474 (TEIPKGPDGSLFDASEEEATWRPASPITPASPSPPSTPTSSALSQ). Position 520–522 (520–522 (SLL)) interacts with FAD. Residue serine 523 coordinates substrate.

The protein belongs to the lysine N(6)-hydroxylase/L-ornithine N(5)-oxygenase family. In terms of assembly, homotetramer. FAD is required as a cofactor.

It carries out the reaction L-ornithine + NADPH + O2 = N(5)-hydroxy-L-ornithine + NADP(+) + H2O. The catalysed reaction is L-ornithine + NADH + O2 = N(5)-hydroxy-L-ornithine + NAD(+) + H2O. It functions in the pathway siderophore biosynthesis. Functionally, L-ornithine N(5)-monooxygenase; part of the siderophore basidioferrin biosynthetic pathway. The biosynthesis of basidioferrin depends on the hydroxylation of ornithine to N(5)-hydroxyornithine, catalyzed by the monooxygenase SMO1. The second step, the acylation of N(5)-hydroxy-L-ornithine is catalyzed by a not yet identified N-acyltransferase. Finally, assembly of basidioferrin is catalyzed by the nonribosomal peptide synthase (NRPS) NPS2 via amide bond formation between three L-AHO molecules to release the linear L-AHO trimer. This is L-ornithine N(5)-monooxygenase (SMO1) from Ceriporiopsis subvermispora (strain B) (White-rot fungus).